We begin with the raw amino-acid sequence, 213 residues long: Orotidine 5'-phosphate decarboxylase (213 aa).

Substrate-binding positions include aspartate 9, lysine 31, 59–68 (DFKVADIPAT), serine 115, 166–176 (PGVGAQGGKIE), glycine 191, and arginine 192. Lysine 61 serves as the catalytic Proton donor.

This sequence belongs to the OMP decarboxylase family. Type 1 subfamily. In terms of assembly, homodimer.

It catalyses the reaction orotidine 5'-phosphate + H(+) = UMP + CO2. The protein operates within pyrimidine metabolism; UMP biosynthesis via de novo pathway; UMP from orotate: step 2/2. In terms of biological role, catalyzes the decarboxylation of orotidine 5'-monophosphate (OMP) to uridine 5'-monophosphate (UMP). In Methanocaldococcus jannaschii (strain ATCC 43067 / DSM 2661 / JAL-1 / JCM 10045 / NBRC 100440) (Methanococcus jannaschii), this protein is Orotidine 5'-phosphate decarboxylase.